The sequence spans 213 residues: MDARILQDNDDTSLPVNQASVTRIHKKPGKPEAEAAVRTLLLWAGEDPDREGLLETPKRVAKAYQELFGGYSESPEEVLGTTFEEVAGYDDMVLVKDISFFSHCEHHMVPIIGKAHVAYLPEGRVVGLSKIARVVDIFARRLQTQESITAQIADSIQRILKPRGVAVMIEAEHMCMAMRSIRKQGSSTITTTFTGDFKEKADQQVRFMTLIRT.

The Zn(2+) site is built by C104, H107, and C175.

The protein belongs to the GTP cyclohydrolase I family. In terms of assembly, homomer.

The catalysed reaction is GTP + H2O = 7,8-dihydroneopterin 3'-triphosphate + formate + H(+). The protein operates within cofactor biosynthesis; 7,8-dihydroneopterin triphosphate biosynthesis; 7,8-dihydroneopterin triphosphate from GTP: step 1/1. This Brucella suis (strain ATCC 23445 / NCTC 10510) protein is GTP cyclohydrolase 1.